The chain runs to 123 residues: Small ribosomal subunit protein uS12 (123 aa).

Aspartate 89 bears the 3-methylthioaspartic acid mark.

The protein belongs to the universal ribosomal protein uS12 family. In terms of assembly, part of the 30S ribosomal subunit. Contacts proteins S8 and S17. May interact with IF1 in the 30S initiation complex.

With S4 and S5 plays an important role in translational accuracy. Functionally, interacts with and stabilizes bases of the 16S rRNA that are involved in tRNA selection in the A site and with the mRNA backbone. Located at the interface of the 30S and 50S subunits, it traverses the body of the 30S subunit contacting proteins on the other side and probably holding the rRNA structure together. The combined cluster of proteins S8, S12 and S17 appears to hold together the shoulder and platform of the 30S subunit. The protein is Small ribosomal subunit protein uS12 of Methylorubrum extorquens (strain PA1) (Methylobacterium extorquens).